A 478-amino-acid polypeptide reads, in one-letter code: WD repeat-containing protein AAC3 (478 aa).

2 disordered regions span residues 33-53 (HPLFNYQFPPGGFQHLQQQQQ) and 106-140 (SQIHQQSQQSQLSNNLNSNSKESTNIPKTNTQYTN). The span at 106–125 (SQIHQQSQQSQLSNNLNSNS) shows a compositional bias: low complexity. Positions 126–140 (KESTNIPKTNTQYTN) are enriched in polar residues. WD repeat units follow at residues 163-202 (GNKKKSTSVAWNANGTKIASSGSDGIVRVWNFDPLGNSNN), 226-268 (GHDG…GTVS), 270-307 (NSENIDVRWSPDGQFIVACTRDDHLALIDLPTIKTLKI), 310-349 (FNGEELNQVGWDNNGDLILMANSMGNIEAYKFLPKSTTHV), 357-396 (GHTASIYCMEFDPTGKYLAAGSADSIVSLWDIEDMMCVKT), 399-438 (KSTFPCRSVSFSFDGQFIAASSFESTIEIFHIESSQPIHT), and 440-478 (ECSGVSSLMWHPTLPLLAYAPEINENNKDPSIRVFGYHS).

Belongs to the THOC3 family.

This is WD repeat-containing protein AAC3 (AAC3) from Dictyostelium discoideum (Social amoeba).